The following is a 117-amino-acid chain: MNAPPAFESFLLFEGEKKITINKDTKVPNACLFTINKEDHTLGNIIKSQLLKDPQVLFAGYKVPHPLEHKIIIRVQTTPDYSPQEAFTNAITDLISELSLLEERFRGAIKDKQEGIE.

Met1 carries the N-acetylmethionine modification.

This sequence belongs to the archaeal Rpo11/eukaryotic RPB11/RPC19 RNA polymerase subunit family. As to quaternary structure, component of the RNA polymerase II (Pol II) core complex consisting of 12 subunits: a ten-subunit catalytic core composed of POLR2A/RPB1, POLR2B/RPB2, POLR2C/RPB3, POLR2I/RPB9, POLR2J/RPB11, POLR2E/RPABC1, POLR2F/RPABC2, POLR2H/RPABC3, POLR2K/RPABC4 and POLR2L/RPABC5 and a mobile stalk composed of two subunits POLR2D/RPB4 and POLR2G/RPB7, protruding from the core and functioning primarily in transcription initiation. Part of Pol II(G) complex, in which Pol II core associates with an additional subunit POLR2M; unlike conventional Pol II, Pol II(G) functions as a transcriptional repressor. Part of TBP-based Pol II pre-initiation complex (PIC), in which Pol II core assembles with general transcription factors and other specific initiation factors including GTF2E1, GTF2E2, GTF2F1, GTF2F2, TCEA1, ERCC2, ERCC3, GTF2H2, GTF2H3, GTF2H4, GTF2H5, GTF2A1, GTF2A2, GTF2B and TBP; this large multi-subunit PIC complex mediates DNA unwinding and targets Pol II core to the transcription start site where the first phosphodiester bond forms. Interacts with AATF. Interacts with PTPN6; this interaction promotes the recruitment of RNA pol II to the PCK1 promoter.

It localises to the nucleus. Its function is as follows. Core component of RNA polymerase II (Pol II), a DNA-dependent RNA polymerase which synthesizes mRNA precursors and many functional non-coding RNAs using the four ribonucleoside triphosphates as substrates. This is DNA-directed RNA polymerase II subunit RPB11 (Polr2j) from Mus musculus (Mouse).